The sequence spans 260 residues: Snake venom serine protease Dav-X (260 aa).

An N-terminal signal peptide occupies residues 1–18; sequence MVLIRVLANLLILQLSYA. The propeptide occupies 19–24; sequence QKSSEL. In terms of domain architecture, Peptidase S1 spans 25–251; the sequence is VIGGVECDIN…YTDWIQNIIA (227 aa). 6 disulfides stabilise this stretch: Cys31-Cys165, Cys52-Cys68, Cys102-Cys258, Cys144-Cys212, Cys176-Cys191, and Cys202-Cys227. His67 functions as the Charge relay system in the catalytic mechanism. Asn81 carries an N-linked (GlcNAc...) asparagine glycan. The Charge relay system role is filled by Asp112. N-linked (GlcNAc...) asparagine glycosylation is found at Asn124 and Asn172. Ser206 serves as the catalytic Charge relay system. Asn241 carries N-linked (GlcNAc...) asparagine glycosylation.

The protein belongs to the peptidase S1 family. Snake venom subfamily. Monomer. As to expression, expressed by the venom gland.

It localises to the secreted. In terms of biological role, snake venom serine protease that may act in the hemostasis system of the prey. The chain is Snake venom serine protease Dav-X from Deinagkistrodon acutus (Hundred-pace snake).